The sequence spans 256 residues: MAVGKNKRLSKGKKGLKKKAQDPFARKDWYGIKAPAPFAIRDVGKTLVNRTTGLKNANDALKGRIVEVSLADLQKDEDHAFRKVKLRVDEVQGKNCLTNFHGLDFTSDKLRSLVRKWQTLIEANVTVQTTDHYLLRLFAIAFTKRRPNQIKKTTYAASSQIRAIRKKMTEIIQREASSCTLQQLTSKLIPEVIGREIEKATQGIYPLQNVHIRKVKLLKAPKFDLGALMALHGESSTDDAGQKVEREFKETVLESV.

Positions 1 to 18 are enriched in basic residues; that stretch reads MAVGKNKRLSKGKKGLKK. Positions 1–20 are disordered; that stretch reads MAVGKNKRLSKGKKGLKKKA. Ala-2 carries the N-acetylalanine; partial modification.

This sequence belongs to the eukaryotic ribosomal protein eS1 family. In terms of assembly, component of the small ribosomal subunit. Mature ribosomes consist of a small (40S) and a large (60S) subunit. The 40S subunit contains about 33 different proteins and 1 molecule of RNA (18S). The 60S subunit contains about 49 different proteins and 3 molecules of RNA (25S, 5.8S and 5S).

It localises to the cytoplasm. This Podospora anserina (strain S / ATCC MYA-4624 / DSM 980 / FGSC 10383) (Pleurage anserina) protein is Small ribosomal subunit protein eS1.